We begin with the raw amino-acid sequence, 446 residues long: D(1A) dopamine receptor (446 aa).

The Extracellular segment spans residues 1 to 22 (MPLNDTTMDRRGLVVERDFSFR). N-linked (GlcNAc...) asparagine glycosylation is present at Asn4. The chain crosses the membrane as a helical span at residues 23–48 (ILTACFLSLLILSTLLGNTLVCAAVI). The Cytoplasmic portion of the chain corresponds to 49–59 (RFRHLRSKVTN). A helical membrane pass occupies residues 60-86 (FFVISLAVSDLLVAVLVMPWKAVAEIA). Over 87-95 (GFWPFGSFC) the chain is Extracellular. Cys95 and Cys185 are oxidised to a cystine. The chain crosses the membrane as a helical span at residues 96–118 (NIWVAFDIMCSTASILNLCVISV). At 119-137 (DRYWAISSPFRYERKMTPK) the chain is on the cytoplasmic side. The helical transmembrane segment at 138–162 (AAFILISVAWTLSVLISFIPVQLNW) threads the bilayer. Over 163-191 (HKARPLSSPDGNVSSQDETMDNCDSSLSR) the chain is Extracellular. A helical transmembrane segment spans residues 192 to 217 (TYAISSSLISFYIPVAIMIVTYTRIY). Residues 218-271 (RIAQKQIRRISALERAAVHAKNCQNTTGNGANVECSQPESSFKMSFKRETKVLK) are Cytoplasmic-facing. Residues 272–298 (TLSVIMGVFVCCWLPFFILNCMVPFCE) traverse the membrane as a helical segment. Over 299-315 (SDLPSGETKPFCIDSIT) the chain is Extracellular. The helical transmembrane segment at 316–340 (FDVFVWFGWANSSLNPIIYAFNADF) threads the bilayer. The Cytoplasmic portion of the chain corresponds to 341–446 (RKAFSTLLGC…PITQNGQHKT (106 aa)). 2 S-palmitoyl cysteine lipidation sites follow: Cys350 and Cys354.

The protein belongs to the G-protein coupled receptor 1 family. In terms of assembly, interacts with DNAJC14 via its C-terminus.

It is found in the cell membrane. It localises to the endoplasmic reticulum membrane. Its subcellular location is the cell projection. The protein resides in the cilium membrane. The protein localises to the dendrite. It is found in the dendritic spine. Functionally, this is one of the five types (D1 to D5) of receptors for dopamine. The activity of this receptor is mediated by G proteins which activate adenylyl cyclase. The sequence is that of D(1A) dopamine receptor (DRD1) from Didelphis virginiana (North American opossum).